A 636-amino-acid polypeptide reads, in one-letter code: DNA-directed RNA polymerase subunit gamma (636 aa).

Cysteine 71, cysteine 73, cysteine 86, and cysteine 89 together coordinate Zn(2+). Mg(2+) contacts are provided by aspartate 467, aspartate 469, and aspartate 471.

It belongs to the RNA polymerase beta' chain family. RpoC1 subfamily. As to quaternary structure, in cyanobacteria the RNAP catalytic core is composed of 2 alpha, 1 beta, 1 beta', 1 gamma and 1 omega subunit. When a sigma factor is associated with the core the holoenzyme is formed, which can initiate transcription. Requires Mg(2+) as cofactor. It depends on Zn(2+) as a cofactor.

It catalyses the reaction RNA(n) + a ribonucleoside 5'-triphosphate = RNA(n+1) + diphosphate. DNA-dependent RNA polymerase catalyzes the transcription of DNA into RNA using the four ribonucleoside triphosphates as substrates. The chain is DNA-directed RNA polymerase subunit gamma from Picosynechococcus sp. (strain ATCC 27264 / PCC 7002 / PR-6) (Agmenellum quadruplicatum).